The primary structure comprises 73 residues: Antimicrobial peptide TsAP-1 (73 aa).

A signal peptide spans 1–22 (MQIKHLITLFFLVLIVADQCSA). Position 39 is a lysine amide (lysine 39). Residues 45 to 73 (EISAQIEQYKDLQKREAELEELLDRLPMY) constitute a propeptide that is removed on maturation.

In terms of tissue distribution, expressed by the venom gland.

The protein localises to the secreted. Functionally, has a low antimicrobial activity against S.aureus, E.coli, and C.albicans (MICs 120-160 uM). Has a low hemolytic activity (4% at 160 uM). Also inhibits the growth of two cancer cell lines on a total of five (the squamous carcinoma cell line H157 (IC(50)=55.9 uM) and the lung adenocarcinoma cell line H838 (IC(50)=52.5 uM)). The protein is Antimicrobial peptide TsAP-1 of Tityus serrulatus (Brazilian scorpion).